The chain runs to 150 residues: Large ribosomal subunit protein uL15 (150 aa).

The interval 1–51 (MKLHTLRPAKGSVKTSKRIGRGTGSGRGGTSTKGHKGAKSRSGYSSKIGFE) is disordered. Gly residues predominate over residues 21-31 (RGTGSGRGGTS).

The protein belongs to the universal ribosomal protein uL15 family. As to quaternary structure, part of the 50S ribosomal subunit.

Functionally, binds to the 23S rRNA. The polypeptide is Large ribosomal subunit protein uL15 (Cytophaga hutchinsonii (strain ATCC 33406 / DSM 1761 / CIP 103989 / NBRC 15051 / NCIMB 9469 / D465)).